Reading from the N-terminus, the 350-residue chain is Hydroxymethylglutaryl-CoA synthase (350 aa).

The active-site Proton donor/acceptor is the Glu-83. Cys-115 serves as the catalytic Acyl-thioester intermediate. The (3S)-3-hydroxy-3-methylglutaryl-CoA site is built by Cys-115 and Thr-156. Arg-204 serves as a coordination point for CoA. Residues Thr-206 and His-239 each coordinate (3S)-3-hydroxy-3-methylglutaryl-CoA. Catalysis depends on His-239, which acts as the Proton donor/acceptor. Lys-244 lines the CoA pocket. (3S)-3-hydroxy-3-methylglutaryl-CoA is bound by residues Asn-271 and Ser-301.

It belongs to the thiolase-like superfamily. Archaeal HMG-CoA synthase family. As to quaternary structure, interacts with acetoacetyl-CoA thiolase that catalyzes the precedent step in the pathway and with a DUF35 protein. The acetoacetyl-CoA thiolase/HMG-CoA synthase complex channels the intermediate via a fused CoA-binding site, which allows for efficient coupling of the endergonic thiolase reaction with the exergonic HMGCS reaction.

The catalysed reaction is acetoacetyl-CoA + acetyl-CoA + H2O = (3S)-3-hydroxy-3-methylglutaryl-CoA + CoA + H(+). It participates in metabolic intermediate biosynthesis; (R)-mevalonate biosynthesis; (R)-mevalonate from acetyl-CoA: step 2/3. In terms of biological role, catalyzes the condensation of acetyl-CoA with acetoacetyl-CoA to form 3-hydroxy-3-methylglutaryl-CoA (HMG-CoA). Functions in the mevalonate (MVA) pathway leading to isopentenyl diphosphate (IPP), a key precursor for the biosynthesis of isoprenoid compounds that are building blocks of archaeal membrane lipids. The polypeptide is Hydroxymethylglutaryl-CoA synthase (Thermococcus kodakarensis (strain ATCC BAA-918 / JCM 12380 / KOD1) (Pyrococcus kodakaraensis (strain KOD1))).